Reading from the N-terminus, the 426-residue chain is Histidine--tRNA ligase (426 aa).

The protein belongs to the class-II aminoacyl-tRNA synthetase family.

Its subcellular location is the cytoplasm. The enzyme catalyses tRNA(His) + L-histidine + ATP = L-histidyl-tRNA(His) + AMP + diphosphate + H(+). This is Histidine--tRNA ligase from Saccharolobus solfataricus (strain ATCC 35092 / DSM 1617 / JCM 11322 / P2) (Sulfolobus solfataricus).